Reading from the N-terminus, the 262-residue chain is Carbohydrate deacetylase (262 aa).

Residue His129 coordinates Mg(2+).

It belongs to the YdjC deacetylase family. As to quaternary structure, homodimer. Requires Mg(2+) as cofactor.

Functionally, probably catalyzes the deacetylation of acetylated carbohydrates an important step in the degradation of oligosaccharides. This is Carbohydrate deacetylase from Enterococcus faecalis (strain ATCC 700802 / V583).